Here is a 415-residue protein sequence, read N- to C-terminus: Dibenzothiophene monooxygenase (415 aa).

Residues Tyr-94, 127–132, 157–161, Arg-280, 365–366, and Thr-387 contribute to the FMN site; these read NASSEN, KHFSS, and IG. The segment at 129-140 is lid loop; the sequence is SSENNSHILDWK.

This sequence belongs to the DszC flavin monooxygenase family. In terms of assembly, homotetramer.

It is found in the cytoplasm. It carries out the reaction dibenzothiophene + 2 FMNH2 + 2 O2 = dibenzothiophene 5,5-dioxide + 2 FMN + 2 H2O + 2 H(+). It catalyses the reaction dibenzothiophene + FMNH2 + O2 = dibenzothiophene 5-oxide + FMN + H2O + H(+). The enzyme catalyses dibenzothiophene 5-oxide + FMNH2 + O2 = dibenzothiophene 5,5-dioxide + FMN + H2O + H(+). The protein operates within sulfur metabolism; dibenzothiophene degradation. Inhibited at high concentrations of FMN or FAD. In terms of biological role, catalyzes the first step of the '4S' desulfurization pathway that removes covalently bound sulfur from dibenzothiophene (DBT) without breaking carbon-carbon bonds. Sulfur dioxygenase which converts DBT to DBT-sulfone (DBTO2 or DBT 5,5-dioxide) probably in a stepwise manner. In addition to FMNH2 can also use FAD (although FAD is less efficient). In Mycolicibacterium goodii (Mycobacterium goodii), this protein is Dibenzothiophene monooxygenase.